The primary structure comprises 134 residues: Profilin (134 aa).

Belongs to the profilin family. Occurs in many kinds of cells as a complex with monomeric actin in a 1:1 ratio.

It localises to the cytoplasm. The protein localises to the cytoskeleton. Its function is as follows. Binds to actin and affects the structure of the cytoskeleton. At high concentrations, profilin prevents the polymerization of actin, whereas it enhances it at low concentrations. By binding to PIP2, it inhibits the formation of IP3 and DG. The protein is Profilin of Brassica napus (Rape).